The chain runs to 353 residues: MKLSDFDFDLPLELIAQNPISKRDESNLLIASTQQYVKTKFYNIIDYLKEGDLLVFNNSKVIKAKLSLDKNITINLNQRLKDNRRATNDDAGRLKSIDYWSAFAKPARKLKVGDEFYFDNHKIIITEKLEMGEIKIKFELANISVFEFLDKYGEMPLPLYIKRPERQKSDDERYQTVYSNIQGSVAAPTAGLHFTNDIINKLKAKGVQVAFVTLHVGAGTFMPVKTENINEHKMHTEYCSITPETAAIINKAKKEKRRIIAVGTTSLRTLESSGINGNVNSGDFETDIFITPGFKFQIVDMLLTNFHFPKSTLFMLVCAFAGFKEMHELYKYAIEEQMRFFSYGDATLLYKKV.

This sequence belongs to the QueA family. As to quaternary structure, monomer.

The protein resides in the cytoplasm. The catalysed reaction is 7-aminomethyl-7-carbaguanosine(34) in tRNA + S-adenosyl-L-methionine = epoxyqueuosine(34) in tRNA + adenine + L-methionine + 2 H(+). It functions in the pathway tRNA modification; tRNA-queuosine biosynthesis. In terms of biological role, transfers and isomerizes the ribose moiety from AdoMet to the 7-aminomethyl group of 7-deazaguanine (preQ1-tRNA) to give epoxyqueuosine (oQ-tRNA). The sequence is that of S-adenosylmethionine:tRNA ribosyltransferase-isomerase from Rickettsia bellii (strain OSU 85-389).